The chain runs to 936 residues: Calcium homeostasis endoplasmic reticulum protein (936 aa).

N-acetylmethionine is present on M1. One copy of the SURP motif repeat lies at 15-57 (VIDKLAQFVARNGPEFEKMTMEKQKDNPKFSFLFGGEFYSYYK). Position 18 is an N6-acetyllysine (K18). A disordered region spans residues 77-102 (EPTSAMPPLPQPPLAPTASLTPAQGT). The span at 81 to 91 (AMPPLPQPPLA) shows a compositional bias: pro residues. In terms of domain architecture, CID spans 149-289 (ETQLDMSEFD…QLQSPALGLG (141 aa)). The segment at 328–646 (LAQQQQQQQQ…RQGPPHINHD (319 aa)) is disordered. Residues 330-355 (QQQQQQQQQQQQQPQPQPQPQIQLPQ) show a composition bias toward low complexity. Residues 363 to 383 (TPPPPAPPPASAPAPTIPPTT) show a composition bias toward pro residues. Polar residues predominate over residues 395–405 (PGSSEYDTSAG). Low complexity predominate over residues 488-500 (PWNNQPDPNWNNQ). A compositionally biased stretch (pro residues) spans 534–550 (PFPPHQQHPQFNQPPHP). Residues 551 to 560 (HNFNRFPPRF) are compositionally biased toward low complexity. Positions 561–572 (MQDDFPPRHPFE) are enriched in basic and acidic residues. Basic residues predominate over residues 594-603 (PHHHPGHRMP). A Phosphotyrosine modification is found at Y723. The tract at residues 731 to 887 (RARRRKGQEK…DPIKGGDVRD (157 aa)) is disordered. The span at 748 to 758 (SRSRSKSRGRS) shows a compositional bias: basic residues. Low complexity predominate over residues 759–773 (SSRSSSRSSKSSRSS). Residues 774–824 (SRSHSRSRSRSSSRSRSRSRSRSRSSRSRSRSRSRSRSKSYSPGRRRRSRS) show a composition bias toward basic residues. Residues S822, S824, and S826 each carry the phosphoserine modification. Phosphothreonine is present on T828. The residue at position 837 (S837) is a Phosphoserine. In terms of domain architecture, G-patch spans 850–900 (EENKGHQMLVKMGWSGSGGLGAKEQGIQDPIKGGDVRDKWDQYKGVGVALD). K853 participates in a covalent cross-link: Glycyl lysine isopeptide (Lys-Gly) (interchain with G-Cter in SUMO2). S864 and S866 each carry phosphoserine. K881 participates in a covalent cross-link: Glycyl lysine isopeptide (Lys-Gly) (interchain with G-Cter in SUMO2). At K888 the chain carries N6-acetyllysine. S913 carries the phosphoserine modification.

It is found in the cytoplasm. It localises to the perinuclear region. Its subcellular location is the endoplasmic reticulum. Involved in calcium homeostasis, growth and proliferation. This chain is Calcium homeostasis endoplasmic reticulum protein, found in Mus musculus (Mouse).